The sequence spans 191 residues: GDP-mannose pyrophosphatase (191 aa).

GDP-alpha-D-mannose contacts are provided by residues Tyr17, 38–40 (KRE), Arg67, and 85–87 (AGL). The Nudix hydrolase domain occupies 43–180 (DRGNGATILL…EIRDGKTVLL (138 aa)). Positions 85, 100, and 104 each coordinate Mg(2+). The Nudix box motif lies at 86–106 (GLLDNDEPEVCIRKEAIEETG). GDP-alpha-D-mannose-binding positions include Glu104, Glu127, 150-151 (DE), and Lys176. Glu151 contacts Mg(2+).

It belongs to the Nudix hydrolase family. NudK subfamily. Homodimer. The cofactor is Mg(2+).

It carries out the reaction GDP-alpha-D-mannose + H2O = alpha-D-mannose 1-phosphate + GMP + 2 H(+). Its function is as follows. Nucleoside diphosphate sugar hydrolase that hydrolyzes GDP-mannose as its preferred substrate, yielding GMP and mannose-1-phosphate. The chain is GDP-mannose pyrophosphatase (nudK) from Escherichia coli (strain UTI89 / UPEC).